Reading from the N-terminus, the 121-residue chain is Large ribosomal subunit protein bL12 (121 aa).

This sequence belongs to the bacterial ribosomal protein bL12 family. Homodimer. Part of the ribosomal stalk of the 50S ribosomal subunit. Forms a multimeric L10(L12)X complex, where L10 forms an elongated spine to which 2 to 4 L12 dimers bind in a sequential fashion. Binds GTP-bound translation factors.

Its function is as follows. Forms part of the ribosomal stalk which helps the ribosome interact with GTP-bound translation factors. Is thus essential for accurate translation. The chain is Large ribosomal subunit protein bL12 from Streptococcus suis (strain 98HAH33).